The sequence spans 294 residues: Zinc finger protein 346 (294 aa).

At methionine 1 the chain carries N-acetylmethionine. The span at 1 to 19 (MECPAPDATDAADPGEAGP) shows a compositional bias: low complexity. The segment at 1–35 (MECPAPDATDAADPGEAGPYKGSEEPEGREPDGVR) is disordered. Over residues 22–35 (GSEEPEGREPDGVR) the composition is skewed to basic and acidic residues. The Matrin-type 1 zinc-finger motif lies at 70-104 (FTSTQCKVCCAMLISESQKLAHYQSKKHANKVKRY). Residues cysteine 75, cysteine 78, histidine 91, and histidine 97 each coordinate Zn(2+). Lysine 114 is covalently cross-linked (Glycyl lysine isopeptide (Lys-Gly) (interchain with G-Cter in SUMO2)). A Matrin-type 2 zinc finger spans residues 131–165 (DKNHCCPICNMTFSSPAVAQSHYLGKTHAKSLKLK). Zn(2+) contacts are provided by cysteine 136, cysteine 139, histidine 152, and histidine 158. A Glycyl lysine isopeptide (Lys-Gly) (interchain with G-Cter in SUMO2) cross-link involves residue lysine 170. 2 Matrin-type zinc fingers span residues 182-216 (DPDK…ETKL) and 236-270 (GKGY…SPKT). The disordered stretch occupies residues 269–294 (KTLVTLGSQTPVQTQPTPKDSSTVQD).

Forms a heteromeric complex with XPO5 and ILF3. Found in a nuclear export complex with XPO5, RAN, ILF3, ZNF346 and double-stranded RNA. Interacts with XPO5. Interacts with ILF3 in an RNA-independent manner. As to expression, expressed in all tissues tested, including heart, brain, spleen, lung, liver, muscle, kidney and testis. Exogenous expression induced apoptosis.

It localises to the nucleus. Its subcellular location is the nucleolus. The protein resides in the cytoplasm. Its function is as follows. Binds with low affinity to dsDNA and ssRNA, and with high affinity to dsRNA, with no detectable sequence specificity. May bind to specific miRNA hairpins. This Mus musculus (Mouse) protein is Zinc finger protein 346 (Znf346).